The following is a 390-amino-acid chain: Protein dimmed (390 aa).

The disordered stretch occupies residues 24 to 163; that stretch reads HNNNNYNTDG…RNMRRLESNE (140 aa). Polar residues-rich tracts occupy residues 29-44 and 55-64; these read YNTD…SAEG and RTSQLSNNTY. N61 is a glycosylation site (N-linked (GlcNAc...) asparagine). A compositionally biased stretch (low complexity) spans 69-78; the sequence is TDSSSQSDDT. Positions 79–90 are enriched in gly residues; the sequence is SGGGGSSNGGGS. Residues 122-141 show a composition bias toward low complexity; the sequence is PSTIAPNSTSSNSSNANGNA. N-linked (GlcNAc...) asparagine glycans are attached at residues N128, N133, and N140. Over residues 151 to 163 the composition is skewed to basic and acidic residues; sequence AKERNMRRLESNE. The 53-residue stretch at 156–208 folds into the bHLH domain; sequence MRRLESNERERMRMHSLNDAFQSLREVIPHVEMERRLSKIETLTLAKNYIINL. Residues N207 and N237 are each glycosylated (N-linked (GlcNAc...) asparagine). A disordered region spans residues 312–339; that stretch reads QQQQASHLPHHQQAMHGHGHLGASIQSQ. N347 carries an N-linked (GlcNAc...) asparagine glycan.

Forms homodimers via the bHLH domain. These dimers bind the core E-box sequence. Detected in the developing nervous system in the bilateral domains in the cephalic region that later on forms part of the ring gland. Concomitantly expressed in the larval central nervous system (CNS), including the dorsal chain neurons as well as several bilateral clusters of neurons: large, midline protocerebral brain cells (MC), lateral protocerebral brain cells (LC), ventral subesophageal neurons (SE) and lateral abdominal neurons, and the transverse nerves. Outside the CNS, detected in at least three classes of endocrine cells: intrinsic cells of the corpora cardiaca, midgut cells, the Inka cells, lateral Bipolar neurons associated with the segmental transverse nerve, and several peptidergic cells of the enteric nervous system. Expressed only in central and peripheral neuroendocrine secretory cells and neurosecretory neurons but not in sensory or motor neurons.

Its subcellular location is the cytoplasm. Its function is as follows. Transcription factor that regulates neurosecretory (NS) cell function and neuroendocrine cell fate. Acts as a master regulator of common NS functions such as Phm expression and neuropeptide production. Plays a role as a regulator of peptide-containing large dense-core vesicle (LDCV) production and peptidergic cell differentiation. Controls transcription of FMRFamide in Tv neuronal cells and Fur1 in Ap-let cells (Tvb and dorsal apterous cells). Also required for up-regulation of Phm in Tv and Ap-let cells, and expression of three neuropeptide genes, Ms, FMRFamide and Lk. Influences both regulated and constitutive secretory activity in neuroendocrine cells at embryonic and postembryonic level. Loss of function studies show reduced cellular levels of various neuropeptides and neuropeptide biosynthetic enzymes. This Drosophila melanogaster (Fruit fly) protein is Protein dimmed (dimm).